The chain runs to 347 residues: N-acetyl-gamma-glutamyl-phosphate reductase (347 aa).

The active site involves Cys-153.

It belongs to the NAGSA dehydrogenase family. Type 1 subfamily.

The protein resides in the cytoplasm. It carries out the reaction N-acetyl-L-glutamate 5-semialdehyde + phosphate + NADP(+) = N-acetyl-L-glutamyl 5-phosphate + NADPH + H(+). Its pathway is amino-acid biosynthesis; L-arginine biosynthesis; N(2)-acetyl-L-ornithine from L-glutamate: step 3/4. In terms of biological role, catalyzes the NADPH-dependent reduction of N-acetyl-5-glutamyl phosphate to yield N-acetyl-L-glutamate 5-semialdehyde. This Mycobacterium avium (strain 104) protein is N-acetyl-gamma-glutamyl-phosphate reductase.